We begin with the raw amino-acid sequence, 399 residues long: Elongation factor Tu (399 aa).

The tr-type G domain occupies 10–209 (KPHVNIGTIG…EVDAYIPTPE (200 aa)). The tract at residues 19–26 (GHVDHGKT) is G1. A GTP-binding site is contributed by 19–26 (GHVDHGKT). Residue T26 participates in Mg(2+) binding. The segment at 60 to 64 (GITIA) is G2. Positions 81-84 (DCPG) are G3. GTP-binding positions include 81–85 (DCPGH) and 136–139 (NKQD). Positions 136–139 (NKQD) are G4. Positions 174-176 (SAL) are G5.

Belongs to the TRAFAC class translation factor GTPase superfamily. Classic translation factor GTPase family. EF-Tu/EF-1A subfamily. Monomer.

Its subcellular location is the cytoplasm. The enzyme catalyses GTP + H2O = GDP + phosphate + H(+). GTP hydrolase that promotes the GTP-dependent binding of aminoacyl-tRNA to the A-site of ribosomes during protein biosynthesis. The polypeptide is Elongation factor Tu (Helicobacter pylori (strain ATCC 700392 / 26695) (Campylobacter pylori)).